The chain runs to 416 residues: Probable 26S proteasome regulatory subunit rpn-6.2 (416 aa).

Positions 217 to 386 constitute a PCI domain; sequence YKTSFSYFYE…DTVVVYPKAD (170 aa).

This sequence belongs to the proteasome subunit S9 family. In terms of assembly, component of the lid subcomplex of the 19S proteasome regulatory particle complex (also named PA700 complex). The 26S proteasome consists of a 20S proteasome core and two 19S regulatory subunits.

Component of the lid subcomplex of the 26S proteasome, a multiprotein complex involved in the ATP-dependent degradation of ubiquitinated proteins. In the complex, rpn-6.2 is required for proteasome assembly. This chain is Probable 26S proteasome regulatory subunit rpn-6.2 (rpn-6.2), found in Caenorhabditis elegans.